The following is a 213-amino-acid chain: NADH dehydrogenase [ubiquinone] iron-sulfur protein 7, mitochondrial (213 aa).

The N-terminal 38 residues, 1 to 38 (MAALSAPGLCGFRILGLRSSVGTAVQARGVHQSVATDG), are a transit peptide targeting the mitochondrion. Residues 32–53 (QSVATDGPSSTQPALPKARAVA) are disordered. A compositionally biased stretch (polar residues) spans 33–44 (SVATDGPSSTQP). 2 residues coordinate [4Fe-4S] cluster: cysteine 88 and cysteine 89. Position 111 is a hydroxyarginine (arginine 111). Residues cysteine 153 and cysteine 183 each contribute to the [4Fe-4S] cluster site.

The protein belongs to the complex I 20 kDa subunit family. Core subunit of respiratory chain NADH dehydrogenase (Complex I) which is composed of 45 different subunits. This is a component of the iron-sulfur (IP) fragment of the enzyme. It depends on [4Fe-4S] cluster as a cofactor. Post-translationally, hydroxylated ar Arg-111 by NDUFAF5 early in the pathway of assembly of complex I, before the formation of the juncture between peripheral and membrane arms.

Its subcellular location is the mitochondrion inner membrane. The enzyme catalyses a ubiquinone + NADH + 5 H(+)(in) = a ubiquinol + NAD(+) + 4 H(+)(out). In terms of biological role, core subunit of the mitochondrial membrane respiratory chain NADH dehydrogenase (Complex I) which catalyzes electron transfer from NADH through the respiratory chain, using ubiquinone as an electron acceptor. Essential for the catalytic activity of complex I. The protein is NADH dehydrogenase [ubiquinone] iron-sulfur protein 7, mitochondrial (NDUFS7) of Gorilla gorilla gorilla (Western lowland gorilla).